The following is a 64-amino-acid chain: Large ribosomal subunit protein bL35 (64 aa).

The disordered stretch occupies residues 1–25; that stretch reads MPKMKTHRGAAKRLKKTGTGKLKRA.

The protein belongs to the bacterial ribosomal protein bL35 family.

This is Large ribosomal subunit protein bL35 from Clostridioides difficile (strain 630) (Peptoclostridium difficile).